Here is a 453-residue protein sequence, read N- to C-terminus: Bifunctional protein GlmU (453 aa).

The segment at 1-225 is pyrophosphorylase; it reads MNIVILAAGT…EWETLGVNSK (225 aa). Residues 6-9, Lys20, Gln71, 76-77, 98-100, Gly135, Glu150, Asn165, and Asn223 each bind UDP-N-acetyl-alpha-D-glucosamine; these read LAAG, GT, and YGD. Mg(2+) is bound at residue Asp100. Position 223 (Asn223) interacts with Mg(2+). The segment at 226-246 is linker; the sequence is QQLAELERIHQRNVADDLLVA. The interval 247-453 is N-acetyltransferase; it reads GVTIADPARI…GYVRPTKKKS (207 aa). UDP-N-acetyl-alpha-D-glucosamine-binding residues include Arg329 and Lys347. Catalysis depends on His359, which acts as the Proton acceptor. UDP-N-acetyl-alpha-D-glucosamine is bound by residues Tyr362 and Asn373. Acetyl-CoA-binding positions include Ala376, 382 to 383, Ser401, and Ala419; that span reads NY.

The protein in the N-terminal section; belongs to the N-acetylglucosamine-1-phosphate uridyltransferase family. This sequence in the C-terminal section; belongs to the transferase hexapeptide repeat family. As to quaternary structure, homotrimer. The cofactor is Mg(2+).

Its subcellular location is the cytoplasm. The catalysed reaction is alpha-D-glucosamine 1-phosphate + acetyl-CoA = N-acetyl-alpha-D-glucosamine 1-phosphate + CoA + H(+). It carries out the reaction N-acetyl-alpha-D-glucosamine 1-phosphate + UTP + H(+) = UDP-N-acetyl-alpha-D-glucosamine + diphosphate. Its pathway is nucleotide-sugar biosynthesis; UDP-N-acetyl-alpha-D-glucosamine biosynthesis; N-acetyl-alpha-D-glucosamine 1-phosphate from alpha-D-glucosamine 6-phosphate (route II): step 2/2. The protein operates within nucleotide-sugar biosynthesis; UDP-N-acetyl-alpha-D-glucosamine biosynthesis; UDP-N-acetyl-alpha-D-glucosamine from N-acetyl-alpha-D-glucosamine 1-phosphate: step 1/1. It functions in the pathway bacterial outer membrane biogenesis; LPS lipid A biosynthesis. Catalyzes the last two sequential reactions in the de novo biosynthetic pathway for UDP-N-acetylglucosamine (UDP-GlcNAc). The C-terminal domain catalyzes the transfer of acetyl group from acetyl coenzyme A to glucosamine-1-phosphate (GlcN-1-P) to produce N-acetylglucosamine-1-phosphate (GlcNAc-1-P), which is converted into UDP-GlcNAc by the transfer of uridine 5-monophosphate (from uridine 5-triphosphate), a reaction catalyzed by the N-terminal domain. This chain is Bifunctional protein GlmU, found in Paraburkholderia phymatum (strain DSM 17167 / CIP 108236 / LMG 21445 / STM815) (Burkholderia phymatum).